The following is a 251-amino-acid chain: Ubiquinone/menaquinone biosynthesis C-methyltransferase UbiE (251 aa).

Residues Thr-74, Asp-95, 123–124 (NA), and Ser-140 contribute to the S-adenosyl-L-methionine site.

It belongs to the class I-like SAM-binding methyltransferase superfamily. MenG/UbiE family.

It catalyses the reaction a 2-demethylmenaquinol + S-adenosyl-L-methionine = a menaquinol + S-adenosyl-L-homocysteine + H(+). It carries out the reaction a 2-methoxy-6-(all-trans-polyprenyl)benzene-1,4-diol + S-adenosyl-L-methionine = a 5-methoxy-2-methyl-3-(all-trans-polyprenyl)benzene-1,4-diol + S-adenosyl-L-homocysteine + H(+). It participates in quinol/quinone metabolism; menaquinone biosynthesis; menaquinol from 1,4-dihydroxy-2-naphthoate: step 2/2. It functions in the pathway cofactor biosynthesis; ubiquinone biosynthesis. Functionally, methyltransferase required for the conversion of demethylmenaquinol (DMKH2) to menaquinol (MKH2) and the conversion of 2-polyprenyl-6-methoxy-1,4-benzoquinol (DDMQH2) to 2-polyprenyl-3-methyl-6-methoxy-1,4-benzoquinol (DMQH2). In Yersinia pestis bv. Antiqua (strain Angola), this protein is Ubiquinone/menaquinone biosynthesis C-methyltransferase UbiE.